A 238-amino-acid chain; its full sequence is Type III pantothenate kinase (238 aa).

An ATP-binding site is contributed by 7-14 (DAGNSGLK). Substrate-binding positions include Tyr88 and 95 to 98 (GVDR). The Proton acceptor role is filled by Asp97. Residue Asp117 participates in K(+) binding. Thr120 contributes to the ATP binding site. Thr172 serves as a coordination point for substrate.

It belongs to the type III pantothenate kinase family. As to quaternary structure, homodimer. Requires NH4(+) as cofactor. K(+) is required as a cofactor.

Its subcellular location is the cytoplasm. The enzyme catalyses (R)-pantothenate + ATP = (R)-4'-phosphopantothenate + ADP + H(+). It participates in cofactor biosynthesis; coenzyme A biosynthesis; CoA from (R)-pantothenate: step 1/5. Catalyzes the phosphorylation of pantothenate (Pan), the first step in CoA biosynthesis. The chain is Type III pantothenate kinase from Hahella chejuensis (strain KCTC 2396).